Here is a 296-residue protein sequence, read N- to C-terminus: MCVRRSLVGLTFCTCYLASYLTNKYVLSVLKFTYPTLFQGWQTLIGGLLLHVSWKLGWVEINSSSRSHVLVWLPASVLFVGIIYAGSRALSRLAIPVFLTLHNVAEVIICGYQKCFQKEKTSPAKICSALLLLAAAGCLPFNDSQFNPDGYFWAIIHLLCVGAYKILQKSQKPSALSDIDQQYLNYIFSVVLLAFASHPTGDLFSVLDFPFLYFYRFHGSCCASGFLGFFLMFSTVKLKNLLAPGQCAAWIFFAKIITAGLSILLFDAILTSATTGCLLLGALGEALLVFSERKSS.

10 consecutive transmembrane segments (helical) span residues L7–V29, F32–V52, S67–S87, L93–Q113, T121–F141, F146–I166, I187–L207, F211–L231, W250–L270, and T271–S291.

Belongs to the nucleotide-sugar transporter family. SLC35A subfamily.

Its subcellular location is the golgi apparatus. The protein resides in the cis-Golgi network membrane. Functionally, golgi-localized UDP-N-acetylglucosamine (UDP-GlcNAc) transporter that transports UDP-N-acetylglucosamine into Golgi lumen. Contributes to lysosomal targeting of NPC2, a key protein required for lysosomal cholesterol exiting, and that utilizes the mannose-6-phosphate (M6P) modification pathway for its lysosomal targeting. The sequence is that of UDP-N-acetylglucosamine transporter TMEM241 from Homo sapiens (Human).